The primary structure comprises 287 residues: CTD small phosphatase-like protein 3 (287 aa).

The FCP1 homology domain occupies 60–219; that stretch reads RSTPEYTLVL…LKLCSFLEAI (160 aa).

The protein belongs to the CTDSPL2 family.

In terms of biological role, probable phosphatase. The protein is CTD small phosphatase-like protein 3 (scpl-3) of Caenorhabditis elegans.